A 157-amino-acid polypeptide reads, in one-letter code: Endoribonuclease YbeY (157 aa).

3 residues coordinate Zn(2+): His111, His115, and His121. Positions 136-157 (ELLAELGHPDPYADDETDSITH) are disordered. The span at 147 to 157 (YADDETDSITH) shows a compositional bias: acidic residues.

This sequence belongs to the endoribonuclease YbeY family. Requires Zn(2+) as cofactor.

The protein localises to the cytoplasm. Its function is as follows. Single strand-specific metallo-endoribonuclease involved in late-stage 70S ribosome quality control and in maturation of the 3' terminus of the 16S rRNA. This chain is Endoribonuclease YbeY, found in Pseudomonas putida (strain ATCC 700007 / DSM 6899 / JCM 31910 / BCRC 17059 / LMG 24140 / F1).